A 101-amino-acid chain; its full sequence is Urease subunit beta (101 aa).

It belongs to the urease beta subunit family. Heterotrimer of UreA (gamma), UreB (beta) and UreC (alpha) subunits. Three heterotrimers associate to form the active enzyme.

Its subcellular location is the cytoplasm. It carries out the reaction urea + 2 H2O + H(+) = hydrogencarbonate + 2 NH4(+). It participates in nitrogen metabolism; urea degradation; CO(2) and NH(3) from urea (urease route): step 1/1. In Ralstonia nicotianae (strain ATCC BAA-1114 / GMI1000) (Ralstonia solanacearum), this protein is Urease subunit beta.